We begin with the raw amino-acid sequence, 185 residues long: Stathmin-4 (185 aa).

Residues 48–185 (SDMEVIELNK…EVRKNKEATR (138 aa)) form the SLD domain. The stretch at 90–185 (SLEEIQKKLE…EVRKNKEATR (96 aa)) forms a coiled coil. Residues 165 to 185 (ERLQEKDKHAEEVRKNKEATR) form a disordered region. The segment covering 166–185 (RLQEKDKHAEEVRKNKEATR) has biased composition (basic and acidic residues).

Belongs to the stathmin family. In terms of tissue distribution, nervous tissue.

In Xenopus laevis (African clawed frog), this protein is Stathmin-4 (stmn4).